Here is a 312-residue protein sequence, read N- to C-terminus: MSDFHHISVMAAEVIQYLAPRAGGIYVDGTLGGGGHARQILEASAPDGLLIGFDRDREAIAIAAERLAPYGERVRLVQRNFACLAETLDEMGIDAIDGFLLDVGVSSHQLDTAARGFSFQHDAPLDMRMDVSSGQSASDLVNTLSEADLARIIWDYGEERWAKRIAAFIVKRREESPIETTMQLVDVIKGAVPRGAWDVRLHPATRTFQALRIAVNDELASLEKALAAGVRFLKKGGRGVVISFHSLEDRIVKTSFRSFAQGCTCPKSIPRCVCGKLPLVKVITGKPVMANEAEVSMNPRSRSARLRAAEKI.

S-adenosyl-L-methionine contacts are provided by residues 34–36, Asp54, Phe81, Asp102, and Gln109; that span reads GGH.

Belongs to the methyltransferase superfamily. RsmH family.

Its subcellular location is the cytoplasm. The catalysed reaction is cytidine(1402) in 16S rRNA + S-adenosyl-L-methionine = N(4)-methylcytidine(1402) in 16S rRNA + S-adenosyl-L-homocysteine + H(+). Functionally, specifically methylates the N4 position of cytidine in position 1402 (C1402) of 16S rRNA. The protein is Ribosomal RNA small subunit methyltransferase H of Geotalea uraniireducens (strain Rf4) (Geobacter uraniireducens).